Here is a 380-residue protein sequence, read N- to C-terminus: Ribosomal RNA large subunit methyltransferase F (380 aa).

Disordered regions lie at residues 1–54 (MSHK…PRNA) and 260–279 (SQVM…ATDK). The segment covering 21–32 (QRQVVSKSSLQK) has biased composition (low complexity). A compositionally biased stretch (basic residues) spans 44–53 (QKSKALHPRN). A compositionally biased stretch (low complexity) spans 260–270 (SQVMSPQVQPS).

Belongs to the methyltransferase superfamily. METTL16/RlmF family.

Its subcellular location is the cytoplasm. It catalyses the reaction adenosine(1618) in 23S rRNA + S-adenosyl-L-methionine = N(6)-methyladenosine(1618) in 23S rRNA + S-adenosyl-L-homocysteine + H(+). Functionally, specifically methylates the adenine in position 1618 of 23S rRNA. In Shewanella pealeana (strain ATCC 700345 / ANG-SQ1), this protein is Ribosomal RNA large subunit methyltransferase F.